The sequence spans 452 residues: Cobyrinate a,c-diamide synthase (452 aa).

The GATase cobBQ-type domain maps to 248-441; that stretch reads RVAYALDAAF…LHIHFYQNPA (194 aa). Cys-330 (nucleophile) is an active-site residue.

Belongs to the CobB/CbiA family. Mg(2+) is required as a cofactor.

The enzyme catalyses cob(II)yrinate + 2 L-glutamine + 2 ATP + 2 H2O = cob(II)yrinate a,c diamide + 2 L-glutamate + 2 ADP + 2 phosphate + 2 H(+). Its pathway is cofactor biosynthesis; adenosylcobalamin biosynthesis; cob(II)yrinate a,c-diamide from sirohydrochlorin (anaerobic route): step 10/10. Its function is as follows. Catalyzes the ATP-dependent amidation of the two carboxylate groups at positions a and c of cobyrinate, using either L-glutamine or ammonia as the nitrogen source. The sequence is that of Cobyrinate a,c-diamide synthase from Listeria innocua serovar 6a (strain ATCC BAA-680 / CLIP 11262).